A 404-amino-acid polypeptide reads, in one-letter code: MQKEIVKTKKMVFGASCIASLKDGKTVFVPYSLPDEVLEISIVKEHKNYTEGKIEKILEVSPHRVEPRCPHFYVCGGCNLQTADDEYQHFLRKSMALEALDRALSLNKEKAVFEKQALEKSFFEKSIFVSGPDWDYRARFQFYIDKDGSLSLKENKSSGSVKIKDCPIAVPAIRNLLKSNLKEYTPNSRIHIFSDGEKIFTQDNAKDCEVRLAGKRIKFNPLGFFQSNLEMTEKLINTIFEYAEISSSVLDFYSGVGTFSLFAYDQAKEIHLVEHNKHALAYAQENFLINSSSSGIVREKKENGFPKIFYHALDGKNWAKTKESKLKFDTVFVDPPRIGIDKEALSWLCSSGTRQIFYISCDPVTFARDTASLLVSGYKLEKHFLFDFYPQTHHIETLGIFRKN.

Residues Cys69, Cys75, Cys78, and Cys166 each coordinate [4Fe-4S] cluster. The S-adenosyl-L-methionine site is built by Gln226, Tyr253, Glu274, and Asp334. Cys361 (nucleophile) is an active-site residue.

It belongs to the class I-like SAM-binding methyltransferase superfamily. RNA M5U methyltransferase family.

This is an uncharacterized protein from Treponema denticola (strain ATCC 35405 / DSM 14222 / CIP 103919 / JCM 8153 / KCTC 15104).